A 451-amino-acid chain; its full sequence is Trigger factor (451 aa).

Residues glycine 162–proline 243 enclose the PPIase FKBP-type domain.

Belongs to the FKBP-type PPIase family. Tig subfamily.

It localises to the cytoplasm. It catalyses the reaction [protein]-peptidylproline (omega=180) = [protein]-peptidylproline (omega=0). Involved in protein export. Acts as a chaperone by maintaining the newly synthesized protein in an open conformation. Functions as a peptidyl-prolyl cis-trans isomerase. The sequence is that of Trigger factor from Corynebacterium aurimucosum (strain ATCC 700975 / DSM 44827 / CIP 107346 / CN-1) (Corynebacterium nigricans).